The sequence spans 174 residues: Inner membrane protein p22 (174 aa).

Residues 1–7 are Intravirion-facing; the sequence is MLHIKMT. A helical transmembrane segment spans residues 8 to 28; that stretch reads ISTLLIALIVLLIIILVVFLY. Residues 29–174 are Virion surface-facing; that stretch reads HKKQQPPKKV…LYLPRNHKYA (146 aa).

The protein belongs to the asfivirus inner membrane protein p22 family.

The protein resides in the virion membrane. It localises to the host cell membrane. The polypeptide is Inner membrane protein p22 (African swine fever virus (isolate Pig/Kenya/KEN-50/1950) (ASFV)).